The following is a 335-amino-acid chain: Leukocyte immunoglobulin-like receptor subfamily B member 4A (335 aa).

The first 23 residues, 1–23 (MIAMLTVLLYLGLILEPRTAVQA), serve as a signal peptide directing secretion. The Extracellular segment spans residues 24–238 (GHLPKPIIWA…TEDGLETYQK (215 aa)). Ig-like C2-type domains lie at 42–125 (YTSV…ENPS) and 124–212 (PSLS…KPSN). The cysteines at positions 49 and 98 are disulfide-linked. Asn133 and Asn191 each carry an N-linked (GlcNAc...) asparagine glycan. Cys144 and Cys196 are oxidised to a cystine. A helical transmembrane segment spans residues 239–260 (ILIGVLVSFLLLFFLLLFLILI). At 261-335 (GYQYGHKKKA…CIRTQEQNNS (75 aa)) the chain is on the cytoplasmic side. 2 short sequence motifs (ITIM motif) span residues 298–303 (IVYAQV) and 320–325 (VTYAQL).

Interacts (when tyrosine phosphorylated) with SH2 domain-containing phosphatases PTPN6/SHP-1 and PTPN11/SHP-2; interaction with PTPN6 enhances inhibition of mast cell activation. In terms of processing, tyrosine phosphorylated. As to expression, expressed on mast cells and natural killer cells (at protein level). Expressed on neutrophils (at protein level). Expressed on eosinophils (at protein level). Expressed on dendritic cells (at protein level). Expressed on memory and marginal zone B cells (at protein level). Expressed on CD8 T cells (at protein level). Expressed in the uterus of pregnant mice where it is detected at day 4.0 of pregnancy with levels dropping at day 4.5. Highly expressed in the luminal epithelium of uterine endometrium with lower levels in the glandular epithelium.

The protein resides in the cell membrane. Its function is as follows. Inhibitory receptor involved in the down-regulation of the immune response. Receptor for FN1. Receptor for integrin ITGAV/ITGB3. Inhibits IgE-mediated mast cell activation, at least in part through interaction with ITGAV/ITGB3. Also inhibits KITLG/SCF-mediated mast cell activation. Through interaction with ITGAV/ITGB3, inhibits antibody production by memory and marginal zone B cells, probably by suppressing their differentiation into plasma cells. Inhibits IFNG production by CD8 T cells, CD4 T cells and natural killer cells. Inhibits antigen presentation by dendritic cells to T cells, preventing T cell activation. Inhibits lipopolysaccharide-mediated neutrophil-dependent vascular injury. Suppresses the allergic inflammatory response by inhibiting infiltration of neutrophils and eosinophils and preventing mast cell degranulation. Inhibits lysis by natural killer cells. This is Leukocyte immunoglobulin-like receptor subfamily B member 4A from Mus musculus (Mouse).